Reading from the N-terminus, the 194-residue chain is Probable thymidylate kinase (194 aa).

Residue 9 to 16 coordinates ATP; that stretch reads GIDGVGKS.

This sequence belongs to the thymidylate kinase family.

It carries out the reaction dTMP + ATP = dTDP + ADP. In Methanopyrus kandleri (strain AV19 / DSM 6324 / JCM 9639 / NBRC 100938), this protein is Probable thymidylate kinase.